Here is a 302-residue protein sequence, read N- to C-terminus: Quinolinate synthase (302 aa).

2 residues coordinate iminosuccinate: H25 and S42. C87 contributes to the [4Fe-4S] cluster binding site. Residues 113–115 (YVN) and S130 each bind iminosuccinate. Residue C172 participates in [4Fe-4S] cluster binding. Residues 198–200 (HPE) and T215 contribute to the iminosuccinate site. Residue C260 coordinates [4Fe-4S] cluster.

It belongs to the quinolinate synthase family. Type 2 subfamily. [4Fe-4S] cluster is required as a cofactor.

Its subcellular location is the cytoplasm. The catalysed reaction is iminosuccinate + dihydroxyacetone phosphate = quinolinate + phosphate + 2 H2O + H(+). The protein operates within cofactor biosynthesis; NAD(+) biosynthesis; quinolinate from iminoaspartate: step 1/1. Functionally, catalyzes the condensation of iminoaspartate with dihydroxyacetone phosphate to form quinolinate. The protein is Quinolinate synthase of Methanoregula boonei (strain DSM 21154 / JCM 14090 / 6A8).